The primary structure comprises 484 residues: Aspartyl aminopeptidase (484 aa).

Methionine 1 bears the N-acetylmethionine mark. Histidine 84 lines the Zn(2+) pocket. Residue histidine 159 participates in substrate binding. The span at 188 to 206 (PVESKSTTTTTTTESPKTS) shows a compositional bias: low complexity. Positions 188–213 (PVESKSTTTTTTTESPKTSDPQDVNS) are disordered. A Zn(2+)-binding site is contributed by aspartate 266. Residue glutamate 301 participates in substrate binding. Zn(2+)-binding residues include glutamate 302 and aspartate 354. Residues aspartate 354, histidine 357, lysine 382, and tyrosine 389 each contribute to the substrate site. Histidine 448 lines the Zn(2+) pocket.

The protein belongs to the peptidase M18 family. Tetrahedron-shaped homododecamer built from six homodimers. Requires Zn(2+) as cofactor.

The protein resides in the cytoplasm. It carries out the reaction Release of an N-terminal aspartate or glutamate from a peptide, with a preference for aspartate.. Its function is as follows. Likely to play an important role in intracellular protein and peptide metabolism. The chain is Aspartyl aminopeptidase (dnpep) from Dictyostelium discoideum (Social amoeba).